Here is a 201-residue protein sequence, read N- to C-terminus: GTP cyclohydrolase 1 (201 aa).

Zn(2+) is bound by residues C90, H93, and C163.

The protein belongs to the GTP cyclohydrolase I family. In terms of assembly, homomer.

It carries out the reaction GTP + H2O = 7,8-dihydroneopterin 3'-triphosphate + formate + H(+). Its pathway is cofactor biosynthesis; 7,8-dihydroneopterin triphosphate biosynthesis; 7,8-dihydroneopterin triphosphate from GTP: step 1/1. The protein is GTP cyclohydrolase 1 of Streptomyces griseus subsp. griseus (strain JCM 4626 / CBS 651.72 / NBRC 13350 / KCC S-0626 / ISP 5235).